We begin with the raw amino-acid sequence, 165 residues long: Pro-MCH (165 aa).

A signal peptide spans 1 to 21 (MAKMTLSSYMLMLAFSLFSQG). The segment at 66–89 (YKNDESGFMNDDDNKNSKNTGSKQ) is disordered. Position 143 is an isoleucine amide (I143). The cysteines at positions 153 and 162 are disulfide-linked.

Belongs to the MCH family. Post-translationally, pro-MCH is processed differentially in the brain and in peripheral organs producing two neuropeptides; NEI and MCH. A third peptide, NGE, may also be produced. Preferential processing in neurons by prohormone convertase 2 (PC2) generates NEI. MCH is generated in neurons of the lateral hypothalmic area by several prohormone convertases including PC1/3, PC2 and PC5/6. As to expression, predominantly expressed in hypothalamus. Also found in heart, intestine, spleen and testis (spermatogonia, early spermatocytes and Sertoli cells). In brain only mature MCH and NEI peptides are present. In peripheral tissues a large product, encompassing the NEI and MCH domains of the precursor, is found predominantly.

The protein localises to the secreted. In terms of biological role, MCH may act as a neurotransmitter or neuromodulator in a broad array of neuronal functions directed toward the regulation of goal-directed behavior, such as food intake, and general arousal. This is Pro-MCH (Pmch) from Mus musculus (Mouse).